The chain runs to 73 residues: Beta-1 adrenergic receptor (73 aa).

The helical transmembrane segment at 1–12 (ISALVSFLPILM) threads the bilayer. At 13–38 (HWWRAENDEARRCYNDPKCCDFVTNR) the chain is on the extracellular side. A disulfide bond links C25 and C31. Residues 39–64 (AYAIASSVVSFYVPLCIMAFVYLRVF) form a helical membrane-spanning segment. Residue S44 participates in cyanopindolol binding. Residues 65–73 (REAQKQVKK) lie on the Cytoplasmic side of the membrane.

This sequence belongs to the G-protein coupled receptor 1 family. Adrenergic receptor subfamily. ADRB1 sub-subfamily. Interacts (via C-terminus PDZ motif) with RAPGEF2; the interaction is direct. Interacts with GOPC, MAGI3 and DLG4. Homologous desensitization of the receptor is mediated by its phosphorylation by beta-adrenergic receptor kinase.

It localises to the cell membrane. Its subcellular location is the early endosome. Its function is as follows. Beta-adrenergic receptors mediate the catecholamine-induced activation of adenylate cyclase through the action of G proteins. This receptor binds epinephrine and norepinephrine with approximately equal affinity. Mediates Ras activation through G(s)-alpha- and cAMP-mediated signaling. In dorsal pons neurons, involved in the regulation of sleep/wake behaviors. The sequence is that of Beta-1 adrenergic receptor (ADRB1) from Meriones unguiculatus (Mongolian jird).